Here is a 730-residue protein sequence, read N- to C-terminus: Catalase R (730 aa).

H105 is an active-site residue. Heme is bound at residue Y392. Residues P403–N433 form a disordered region.

It belongs to the catalase family. It depends on heme as a cofactor.

It carries out the reaction 2 H2O2 = O2 + 2 H2O. Its function is as follows. Occurs in almost all aerobically respiring organisms and serves to protect cells from the toxic effects of hydrogen peroxide. The sequence is that of Catalase R (catR) from Aspergillus niger.